We begin with the raw amino-acid sequence, 208 residues long: FMN-dependent NADH:quinone oxidoreductase (208 aa).

FMN-binding positions include 17 to 19 (SNS), 99 to 102 (MWNL), and 143 to 146 (SRGG).

The protein belongs to the azoreductase type 1 family. Homodimer. It depends on FMN as a cofactor.

It catalyses the reaction 2 a quinone + NADH + H(+) = 2 a 1,4-benzosemiquinone + NAD(+). It carries out the reaction N,N-dimethyl-1,4-phenylenediamine + anthranilate + 2 NAD(+) = 2-(4-dimethylaminophenyl)diazenylbenzoate + 2 NADH + 2 H(+). In terms of biological role, quinone reductase that provides resistance to thiol-specific stress caused by electrophilic quinones. Its function is as follows. Also exhibits azoreductase activity. Catalyzes the reductive cleavage of the azo bond in aromatic azo compounds to the corresponding amines. This chain is FMN-dependent NADH:quinone oxidoreductase, found in Staphylococcus aureus (strain COL).